Reading from the N-terminus, the 264-residue chain is Thymidylate synthase (264 aa).

R21 is a binding site for dUMP. A (6R)-5,10-methylene-5,6,7,8-tetrahydrofolate-binding site is contributed by H51. Position 126–127 (126–127) interacts with dUMP; the sequence is RR. C146 (nucleophile) is an active-site residue. Residues 166–169, N177, and 207–209 each bind dUMP; these read RSCD and HLY. Residue D169 participates in (6R)-5,10-methylene-5,6,7,8-tetrahydrofolate binding. S263 is a binding site for (6R)-5,10-methylene-5,6,7,8-tetrahydrofolate.

The protein belongs to the thymidylate synthase family. Bacterial-type ThyA subfamily. In terms of assembly, homodimer.

The protein resides in the cytoplasm. The catalysed reaction is dUMP + (6R)-5,10-methylene-5,6,7,8-tetrahydrofolate = 7,8-dihydrofolate + dTMP. Its pathway is pyrimidine metabolism; dTTP biosynthesis. Its function is as follows. Catalyzes the reductive methylation of 2'-deoxyuridine-5'-monophosphate (dUMP) to 2'-deoxythymidine-5'-monophosphate (dTMP) while utilizing 5,10-methylenetetrahydrofolate (mTHF) as the methyl donor and reductant in the reaction, yielding dihydrofolate (DHF) as a by-product. This enzymatic reaction provides an intracellular de novo source of dTMP, an essential precursor for DNA biosynthesis. In Buchnera aphidicola subsp. Acyrthosiphon pisum (strain Tuc7), this protein is Thymidylate synthase.